The primary structure comprises 1215 residues: Cellulose synthase-like protein D4 (1215 aa).

Disordered stretches follow at residues 24–46 and 206–231; these read GGDAVVRRGSGLTSPVPRHSLGS and SDTDESDSVTDDDDDEAVSSSEERDQ. The span at 207–222 shows a compositional bias: acidic residues; sequence DTDESDSVTDDDDDEA. 2 helical membrane-spanning segments follow: residues 321-341 and 352-372; these read AILSPYRLLIAIRLVALGFFL and AVWLWAMSVACEVWFAFSWLL. Active-site residues include Asp452 and Asp905. 6 helical membrane-spanning segments follow: residues 988–1008, 1014–1034, 1060–1080, 1114–1134, 1147–1167, and 1177–1197; these read VFLLAYCLLPAVSLFSGKFIV, TFLAFLLVITLTLCLLALLEI, PAAVLQGLLKVIAGVDISFTL, LMVPPVTIMMVNAVAIAVAAA, LLGGAFFSFWVLCHLYPFAKG, and TIVFVWSGLISMIISLLWVYI.

The protein belongs to the glycosyltransferase 2 family. Plant cellulose synthase-like D subfamily.

Its subcellular location is the golgi apparatus membrane. Functionally, thought to be a Golgi-localized beta-glycan synthase that polymerize the backbones of noncellulosic polysaccharides (hemicelluloses) of plant cell wall. In Oryza sativa subsp. japonica (Rice), this protein is Cellulose synthase-like protein D4 (CSLD4).